Consider the following 313-residue polypeptide: Probable RuBisCO transcriptional regulator (313 aa).

The HTH lysR-type domain maps to 6–63; the sequence is FTLDQLLILKAIAAQGSFKKAADSLYISQPAVSMQVQNIEKQLNVQLLDRGGRRANLT. The H-T-H motif DNA-binding region spans 23-42; the sequence is FKKAADSLYISQPAVSMQVQ.

It belongs to the LysR transcriptional regulatory family.

The protein resides in the plastid. The protein localises to the chloroplast. Its function is as follows. Trans-acting transcriptional regulator of RuBisCO genes (rbcL and rbcS) expression. In Chlorokybus atmophyticus (Soil alga), this protein is Probable RuBisCO transcriptional regulator (rbcR).